Consider the following 129-residue polypeptide: Protein Turandot B1 (129 aa).

Positions 1-21 are cleaved as a signal peptide; the sequence is MNSATSLMCFALLLISPLCMG.

It belongs to the Turandot family.

It is found in the secreted. Functionally, a humoral factor that may play a role in stress tolerance. The protein is Protein Turandot B1 (TotB1) of Drosophila erecta (Fruit fly).